The primary structure comprises 466 residues: Glutamate--tRNA ligase (466 aa).

The 'HIGH' region signature appears at 11 to 21 (PSPTGFIHLGN). The 'KMSKS' region signature appears at 243–247 (KMSKR). Lysine 246 is an ATP binding site.

This sequence belongs to the class-I aminoacyl-tRNA synthetase family. Glutamate--tRNA ligase type 1 subfamily. As to quaternary structure, monomer.

It is found in the cytoplasm. The enzyme catalyses tRNA(Glu) + L-glutamate + ATP = L-glutamyl-tRNA(Glu) + AMP + diphosphate. In terms of biological role, catalyzes the attachment of glutamate to tRNA(Glu) in a two-step reaction: glutamate is first activated by ATP to form Glu-AMP and then transferred to the acceptor end of tRNA(Glu). The sequence is that of Glutamate--tRNA ligase from Cupriavidus taiwanensis (strain DSM 17343 / BCRC 17206 / CCUG 44338 / CIP 107171 / LMG 19424 / R1) (Ralstonia taiwanensis (strain LMG 19424)).